A 264-amino-acid chain; its full sequence is Glutamate racemase (264 aa).

Substrate is bound by residues 10 to 11 and 42 to 43; these read DS and YG. Catalysis depends on cysteine 73, which acts as the Proton donor/acceptor. Substrate is bound at residue 74-75; that stretch reads NT. The active-site Proton donor/acceptor is the cysteine 183. A substrate-binding site is contributed by 184-185; that stretch reads TH.

This sequence belongs to the aspartate/glutamate racemases family.

The catalysed reaction is L-glutamate = D-glutamate. It participates in cell wall biogenesis; peptidoglycan biosynthesis. Functionally, provides the (R)-glutamate required for cell wall biosynthesis. This chain is Glutamate racemase, found in Streptococcus gordonii (strain Challis / ATCC 35105 / BCRC 15272 / CH1 / DL1 / V288).